The primary structure comprises 297 residues: MVRVRIPATSANLGPGFDCLGMALSLYNVVQIEAADSFQIALKGDYTAGIPGDETNLVWQSMCNLWEAIGFEIPTVSLELENNIPPTRGMGSSSAAIVGGLVAANEYAGGVLSKQQILQIANRIEGHPDNVAPALLGGVTLAVTAEASVIARTVHSQPQFMALAIVPDFYLSTEKSRNVLPASISRADAVYNLSRTALLVEALIHENYELLKEGMQDRLHQNQRASLVPGLGETLQVALDSGAYGSALSGSGPTILALVSSHRAEQVSQAMVDSLAAHGLTAKAYLLSVDSEGAAVI.

85 to 95 (PPTRGMGSSSA) contributes to the ATP binding site.

It belongs to the GHMP kinase family. Homoserine kinase subfamily.

It localises to the cytoplasm. The catalysed reaction is L-homoserine + ATP = O-phospho-L-homoserine + ADP + H(+). It participates in amino-acid biosynthesis; L-threonine biosynthesis; L-threonine from L-aspartate: step 4/5. Catalyzes the ATP-dependent phosphorylation of L-homoserine to L-homoserine phosphate. In Desulfitobacterium hafniense (strain DSM 10664 / DCB-2), this protein is Homoserine kinase.